A 215-amino-acid chain; its full sequence is Octanoyltransferase (215 aa).

Residues 35-210 (PDTPDQLWVV…HCLEAIVEYG (176 aa)) form the BPL/LPL catalytic domain. Substrate is bound by residues 74–81 (RGGQVTYH), 141–143 (SVG), and 154–156 (GLA). Cys172 (acyl-thioester intermediate) is an active-site residue.

Belongs to the LipB family.

The protein localises to the cytoplasm. The catalysed reaction is octanoyl-[ACP] + L-lysyl-[protein] = N(6)-octanoyl-L-lysyl-[protein] + holo-[ACP] + H(+). It functions in the pathway protein modification; protein lipoylation via endogenous pathway; protein N(6)-(lipoyl)lysine from octanoyl-[acyl-carrier-protein]: step 1/2. Catalyzes the transfer of endogenously produced octanoic acid from octanoyl-acyl-carrier-protein onto the lipoyl domains of lipoate-dependent enzymes. Lipoyl-ACP can also act as a substrate although octanoyl-ACP is likely to be the physiological substrate. This chain is Octanoyltransferase, found in Alkalilimnicola ehrlichii (strain ATCC BAA-1101 / DSM 17681 / MLHE-1).